The primary structure comprises 569 residues: Glycylpeptide N-tetradecanoyltransferase (569 aa).

The segment covering 1–18 (MPPTEESKPVDPAQEKQA) has biased composition (basic and acidic residues). The tract at residues 1–82 (MPPTEESKPV…STESSAEVGL (82 aa)) is disordered. Positions 55 to 68 (TKKKNKKKSKKKNK) are enriched in basic residues. Tetradecanoyl-CoA is bound by residues 158–161 (YKFW), 291–293 (LCI), and 299–303 (GKRLA). The active-site Proton acceptor; via carboxylate is valine 569.

This sequence belongs to the NMT family. Monomer.

It is found in the cytoplasm. It carries out the reaction N-terminal glycyl-[protein] + tetradecanoyl-CoA = N-tetradecanoylglycyl-[protein] + CoA + H(+). Its function is as follows. Adds a myristoyl group to the N-terminal glycine residue of certain cellular proteins. This is Glycylpeptide N-tetradecanoyltransferase (gtt-1) from Neurospora crassa (strain ATCC 24698 / 74-OR23-1A / CBS 708.71 / DSM 1257 / FGSC 987).